A 250-amino-acid polypeptide reads, in one-letter code: Malonyl-[acyl-carrier protein] O-methyltransferase (250 aa).

Belongs to the methyltransferase superfamily.

The enzyme catalyses malonyl-[ACP] + S-adenosyl-L-methionine = malonyl-[ACP] methyl ester + S-adenosyl-L-homocysteine. Its pathway is cofactor biosynthesis; biotin biosynthesis. Its function is as follows. Converts the free carboxyl group of a malonyl-thioester to its methyl ester by transfer of a methyl group from S-adenosyl-L-methionine (SAM). It allows to synthesize pimeloyl-ACP via the fatty acid synthetic pathway. The protein is Malonyl-[acyl-carrier protein] O-methyltransferase of Neorickettsia risticii (strain Illinois).